The sequence spans 118 residues: Large ribosomal subunit protein uL18 (118 aa).

It belongs to the universal ribosomal protein uL18 family. As to quaternary structure, part of the 50S ribosomal subunit; part of the 5S rRNA/L5/L18/L25 subcomplex. Contacts the 5S and 23S rRNAs.

In terms of biological role, this is one of the proteins that bind and probably mediate the attachment of the 5S RNA into the large ribosomal subunit, where it forms part of the central protuberance. The protein is Large ribosomal subunit protein uL18 of Wolinella succinogenes (strain ATCC 29543 / DSM 1740 / CCUG 13145 / JCM 31913 / LMG 7466 / NCTC 11488 / FDC 602W) (Vibrio succinogenes).